The following is a 472-amino-acid chain: Alanine--anticapsin ligase (472 aa).

Glu109 is a Mg(2+) binding site. Lys138 and Lys178 together coordinate ATP. The 214-residue stretch at 142–355 (RAAFNRAGVK…MAQLLLDVLC (214 aa)) folds into the ATP-grasp domain. Leu182 contributes to the Mg(2+) binding site. Residues 184–185 (SS), 226–229 (EEFL), and Gln268 contribute to the ATP site. Residues Glu273 and 309 to 311 (HTE) contribute to the substrate site. Residues Glu311 and Glu324 each contribute to the Mg(2+) site. Residue 328 to 331 (RFAG) coordinates substrate.

In terms of assembly, monomer or homodimer. Requires Mg(2+) as cofactor.

The catalysed reaction is L-anticapsin + L-alanine + ATP = bacilysin + ADP + phosphate + H(+). It functions in the pathway antibiotic biosynthesis; bacilysin biosynthesis. Part of the bacABCDEFG operon responsible for the biosynthesis of bacilysin, an irreversible inactivator of the glutaminase domain of glucosamine synthetase. Catalyzes the formation of alpha-dipeptides from various L-amino acids in the presence of ATP. In vivo catalyzes the ligation of L-alanine and L-anticapsin (epoxycyclohexanonyl-Ala) to produce the final bacilysin antibiotic (L-Ala-L-4S-cyclohexenonyl-Ala dipeptide). The sequence is that of Alanine--anticapsin ligase from Bacillus subtilis.